A 432-amino-acid polypeptide reads, in one-letter code: Hexuronate transporter (432 aa).

The N-terminal stretch at Met1–Ala31 is a signal peptide. Topologically, residues Ala33–Ser48 are periplasmic. Residues Tyr49 to Leu69 form a helical membrane-spanning segment. At Asp70 to Lys75 the chain is on the cytoplasmic side. A helical transmembrane segment spans residues Ile76–Gly96. The Periplasmic segment spans residues Ser97 to Gly99. The helical transmembrane segment at Gly100–Leu120 threads the bilayer. Over Lys121 to Tyr138 the chain is Cytoplasmic. Residues Phe139–Val159 form a helical membrane-spanning segment. At Met160–Gln164 the chain is on the periplasmic side. The helical transmembrane segment at Met165–Tyr185 threads the bilayer. The Cytoplasmic portion of the chain corresponds to Lys186 to Arg236. The helical transmembrane segment at Phe237–Val257 threads the bilayer. Residues Tyr258–Glu264 are Periplasmic-facing. The chain crosses the membrane as a helical span at residues Ile265–Tyr285. The Cytoplasmic segment spans residues Leu286–Trp293. Residues Phe294–Ile314 form a helical membrane-spanning segment. Residues Gly315–Gly317 lie on the Periplasmic side of the membrane. A helical membrane pass occupies residues Met318 to Ala338. Over His339–Ser369 the chain is Cytoplasmic. A helical membrane pass occupies residues Ala370–Phe390. Ser391 is a topological domain (periplasmic). Residues Pro392–Leu412 traverse the membrane as a helical segment. Over Gln413 to His432 the chain is Cytoplasmic.

It belongs to the major facilitator superfamily. Phthalate permease family.

The protein localises to the cell inner membrane. The enzyme catalyses aldehydo-D-glucuronate(in) + H(+)(in) = aldehydo-D-glucuronate(out) + H(+)(out). The catalysed reaction is aldehydo-D-galacturonate(out) + H(+)(out) = aldehydo-D-galacturonate(in) + H(+)(in). In terms of biological role, transport of aldohexuronates such as D-glucuronate and D-galacturonate. The chain is Hexuronate transporter (exuT) from Escherichia coli O157:H7.